The primary structure comprises 176 residues: ATP-dependent protease subunit HslV (176 aa).

Residue Thr-2 is part of the active site. The Na(+) site is built by Gly-157, Cys-160, and Thr-163.

Belongs to the peptidase T1B family. HslV subfamily. In terms of assembly, a double ring-shaped homohexamer of HslV is capped on each side by a ring-shaped HslU homohexamer. The assembly of the HslU/HslV complex is dependent on binding of ATP.

It is found in the cytoplasm. The catalysed reaction is ATP-dependent cleavage of peptide bonds with broad specificity.. Its activity is regulated as follows. Allosterically activated by HslU binding. Its function is as follows. Protease subunit of a proteasome-like degradation complex believed to be a general protein degrading machinery. This Escherichia coli O45:K1 (strain S88 / ExPEC) protein is ATP-dependent protease subunit HslV.